A 258-amino-acid polypeptide reads, in one-letter code: Phycoerythrobilin:ferredoxin oxidoreductase (258 aa).

The protein belongs to the HY2 family.

It carries out the reaction (3Z)-phycoerythrobilin + oxidized 2[4Fe-4S]-[ferredoxin] = 15,16-dihydrobiliverdin + reduced 2[4Fe-4S]-[ferredoxin] + 2 H(+). In terms of biological role, catalyzes the two-electron reduction of the C2 and C3(1) diene system of 15,16-dihydrobiliverdin. This Prochlorococcus marinus (strain NATL2A) protein is Phycoerythrobilin:ferredoxin oxidoreductase.